The chain runs to 321 residues: GTP 3',8-cyclase (321 aa).

In terms of domain architecture, Radical SAM core spans 5-233; the sequence is SFNRVIDYIR…QGSSKIYTLE (229 aa). Position 14 (Arg-14) interacts with GTP. Positions 21 and 25 each coordinate [4Fe-4S] cluster. Residue Tyr-27 coordinates S-adenosyl-L-methionine. Position 28 (Cys-28) interacts with [4Fe-4S] cluster. Arg-64 serves as a coordination point for GTP. Residue Gly-68 coordinates S-adenosyl-L-methionine. Residue Ser-95 participates in GTP binding. Ser-119 serves as a coordination point for S-adenosyl-L-methionine. A GTP-binding site is contributed by Lys-155. Residue Met-189 coordinates S-adenosyl-L-methionine. Residues Cys-249 and Cys-252 each coordinate [4Fe-4S] cluster. 254–256 provides a ligand contact to GTP; the sequence is RIR. Cys-266 is a [4Fe-4S] cluster binding site.

The protein belongs to the radical SAM superfamily. MoaA family. As to quaternary structure, monomer and homodimer. Requires [4Fe-4S] cluster as cofactor.

It catalyses the reaction GTP + AH2 + S-adenosyl-L-methionine = (8S)-3',8-cyclo-7,8-dihydroguanosine 5'-triphosphate + 5'-deoxyadenosine + L-methionine + A + H(+). The protein operates within cofactor biosynthesis; molybdopterin biosynthesis. In terms of biological role, catalyzes the cyclization of GTP to (8S)-3',8-cyclo-7,8-dihydroguanosine 5'-triphosphate. The protein is GTP 3',8-cyclase of Helicobacter pylori (strain J99 / ATCC 700824) (Campylobacter pylori J99).